We begin with the raw amino-acid sequence, 605 residues long: Adaptin medium chain homolog APM2 (605 aa).

A disordered region spans residues 150-196; it reads EEWSPGEESSSSSGSDSDSEYSNTNKRKDKKKKRKKKKGTKGKSVGK. The span at 155-171 shows a compositional bias: low complexity; sequence GEESSSSSGSDSDSEYS. Positions 174–196 are enriched in basic residues; sequence NKRKDKKKKRKKKKGTKGKSVGK. The 336-residue stretch at 269–604 folds into the MHD domain; sequence KNEFFLDVIE…TVSDEEYAYI (336 aa).

It belongs to the adaptor complexes medium subunit family. Component of the AP-1R complex composed of at least APM2, APL4 and APS1. Interacts with MIL1. Interacts with APL2.

It is found in the golgi apparatus membrane. Its subcellular location is the early endosome membrane. The protein localises to the cytoplasmic vesicle. The protein resides in the clathrin-coated vesicle membrane. Component of the AP-1-related (AP-1R) complex, an adapter protein complex that mediates of cargo protein sorting in clathrin-coated vesicles. AP-1R has a specific role in SNARE SNC1 sorting. In contrast to the APM1-containing AP-1 complex, AP-1R is incapable of sorting CHS3. The protein is Adaptin medium chain homolog APM2 (APM2) of Saccharomyces cerevisiae (strain ATCC 204508 / S288c) (Baker's yeast).